Reading from the N-terminus, the 562-residue chain is Carboxylesterase 1E (562 aa).

The N-terminal stretch at 1–19 (MCLSALILVSLAAFTAGAG) is a signal peptide. N-linked (GlcNAc...) asparagine glycosylation is present at asparagine 80. Cysteine 88 and cysteine 117 form a disulfide bridge. Serine 222 serves as the catalytic Acyl-ester intermediate. An intrachain disulfide couples cysteine 274 to cysteine 285. Asparagine 276 carries N-linked (GlcNAc...) asparagine glycosylation. Residues glutamate 354 and histidine 467 each act as charge relay system in the active site. A glycan (N-linked (GlcNAc...) asparagine) is linked at asparagine 490. The Prevents secretion from ER motif lies at 559-562 (HTEL).

It belongs to the type-B carboxylesterase/lipase family.

It is found in the endoplasmic reticulum lumen. Its subcellular location is the microsome membrane. The catalysed reaction is a carboxylic ester + H2O = an alcohol + a carboxylate + H(+). It carries out the reaction all-trans-retinyl hexadecanoate + H2O = all-trans-retinol + hexadecanoate + H(+). In terms of biological role, involved in the detoxification of xenobiotics and in the activation of ester and amide prodrugs. Hydrolyzes retinyl esters. The polypeptide is Carboxylesterase 1E (Mus musculus (Mouse)).